The chain runs to 138 residues: Transcription antitermination protein NusB (138 aa).

This sequence belongs to the NusB family.

Its function is as follows. Involved in transcription antitermination. Required for transcription of ribosomal RNA (rRNA) genes. Binds specifically to the boxA antiterminator sequence of the ribosomal RNA (rrn) operons. The sequence is that of Transcription antitermination protein NusB from Coxiella burnetii (strain Dugway 5J108-111).